Reading from the N-terminus, the 378-residue chain is Quinolinate synthase (378 aa).

Iminosuccinate contacts are provided by His59 and Ser80. A [4Fe-4S] cluster-binding site is contributed by Cys125. Iminosuccinate is bound by residues 151 to 153 and Ser168; that span reads YAN. [4Fe-4S] cluster is bound at residue Cys212. Residues 238–240 and Thr255 each bind iminosuccinate; that span reads HPE. Cys309 is a binding site for [4Fe-4S] cluster.

Belongs to the quinolinate synthase family. Type 1 subfamily. The cofactor is [4Fe-4S] cluster.

It localises to the cytoplasm. It carries out the reaction iminosuccinate + dihydroxyacetone phosphate = quinolinate + phosphate + 2 H2O + H(+). It participates in cofactor biosynthesis; NAD(+) biosynthesis; quinolinate from iminoaspartate: step 1/1. Its function is as follows. Catalyzes the condensation of iminoaspartate with dihydroxyacetone phosphate to form quinolinate. The sequence is that of Quinolinate synthase from Burkholderia pseudomallei (strain 668).